Reading from the N-terminus, the 943-residue chain is Isoleucine--tRNA ligase (943 aa).

Residues 58–68 (PYANGKIHIGH) carry the 'HIGH' region motif. E567 is an L-isoleucyl-5'-AMP binding site. Positions 608-612 (KMSKS) match the 'KMSKS' region motif. K611 is a binding site for ATP. Residues C906, C909, C926, and C929 each coordinate Zn(2+).

The protein belongs to the class-I aminoacyl-tRNA synthetase family. IleS type 1 subfamily. Monomer. Zn(2+) serves as cofactor.

It is found in the cytoplasm. The catalysed reaction is tRNA(Ile) + L-isoleucine + ATP = L-isoleucyl-tRNA(Ile) + AMP + diphosphate. Catalyzes the attachment of isoleucine to tRNA(Ile). As IleRS can inadvertently accommodate and process structurally similar amino acids such as valine, to avoid such errors it has two additional distinct tRNA(Ile)-dependent editing activities. One activity is designated as 'pretransfer' editing and involves the hydrolysis of activated Val-AMP. The other activity is designated 'posttransfer' editing and involves deacylation of mischarged Val-tRNA(Ile). The sequence is that of Isoleucine--tRNA ligase from Pseudomonas entomophila (strain L48).